Here is a 423-residue protein sequence, read N- to C-terminus: AP-1 complex subunit mu-1 (423 aa).

Ser2 bears the N-acetylserine mark. Phosphothreonine occurs at positions 152, 154, and 223. Positions 168-421 (KNEVFLDVIE…ITQNGDYQLR (254 aa)) constitute an MHD domain.

It belongs to the adaptor complexes medium subunit family. In terms of assembly, adaptor protein complex 1 (AP-1) is a heterotetramer composed of two large adaptins (gamma-type subunit AP1G1 and beta-type subunit AP1B1), a medium adaptin (mu-type subunit AP1M1 or AP1M2) and a small adaptin (sigma-type subunit AP1S1 or AP1S2 or AP1S3). Interacts with MARCHF11. In terms of processing, phosphorylation of membrane-bound AP1M1/AP1M2 increases its affinity for sorting signals.

It localises to the golgi apparatus. The protein resides in the cytoplasmic vesicle. The protein localises to the clathrin-coated vesicle membrane. Functionally, subunit of clathrin-associated adaptor protein complex 1 that plays a role in protein sorting in the trans-Golgi network (TGN) and endosomes. The AP complexes mediate the recruitment of clathrin to membranes and the recognition of sorting signals within the cytosolic tails of transmembrane cargo molecules. This is AP-1 complex subunit mu-1 (Ap1m1) from Mus musculus (Mouse).